A 172-amino-acid chain; its full sequence is 3-hydroxydecanoyl-[acyl-carrier-protein] dehydratase (172 aa).

His71 is an active-site residue.

The protein belongs to the thioester dehydratase family. FabA subfamily. As to quaternary structure, homodimer.

Its subcellular location is the cytoplasm. It catalyses the reaction a (3R)-hydroxyacyl-[ACP] = a (2E)-enoyl-[ACP] + H2O. The catalysed reaction is (3R)-hydroxydecanoyl-[ACP] = (2E)-decenoyl-[ACP] + H2O. The enzyme catalyses (2E)-decenoyl-[ACP] = (3Z)-decenoyl-[ACP]. Its pathway is lipid metabolism; fatty acid biosynthesis. Its function is as follows. Necessary for the introduction of cis unsaturation into fatty acids. Catalyzes the dehydration of (3R)-3-hydroxydecanoyl-ACP to E-(2)-decenoyl-ACP and then its isomerization to Z-(3)-decenoyl-ACP. Can catalyze the dehydratase reaction for beta-hydroxyacyl-ACPs with saturated chain lengths up to 16:0, being most active on intermediate chain length. This chain is 3-hydroxydecanoyl-[acyl-carrier-protein] dehydratase, found in Blochmanniella floridana.